The chain runs to 520 residues: Versicolorin B desaturase (520 aa).

A helical transmembrane segment spans residues 22–42 (IFTTILSIFGIALSAVAAWGI). 2 N-linked (GlcNAc...) asparagine glycosylation sites follow: Asn266 and Asn426. Cys462 contacts heme.

This sequence belongs to the cytochrome P450 family. It depends on heme as a cofactor.

It is found in the membrane. The catalysed reaction is versicolorin B + NADPH + O2 + H(+) = versicolorin A + NADP(+) + 2 H2O. It participates in mycotoxin biosynthesis. Versicolorin B desaturase; part of the fragmented gene cluster that mediates the biosynthesis of dothistromin (DOTH), a polyketide toxin very similar in structure to the aflatoxin precursor, versicolorin B. The first step of the pathway is the conversion of acetate to norsolorinic acid (NOR) and requires the fatty acid synthase subunits hexA and hexB, as well as the polyketide synthase pksA. PksA combines a hexanoyl starter unit and 7 malonyl-CoA extender units to synthesize the precursor NOR. The hexanoyl starter unit is provided to the acyl-carrier protein (ACP) domain by the fungal fatty acid synthase hexA/hexB. The second step is the conversion of NOR to averantin (AVN) and requires the norsolorinic acid ketoreductase nor1, which catalyzes the dehydration of norsolorinic acid to form (1'S)-averantin. The cytochrome P450 monooxygenase avnA then catalyzes the hydroxylation of AVN to 5'hydroxyaverantin (HAVN). The next step is performed by adhA that transforms HAVN to averufin (AVF). Averufin might then be converted to hydroxyversicolorone by cypX and avfA. Hydroxyversicolorone is further converted versiconal hemiacetal acetate (VHA) by moxY. VHA is then the substrate for the versiconal hemiacetal acetate esterase est1 to yield versiconal (VAL). Versicolorin B synthase vbsA then converts VAL to versicolorin B (VERB) by closing the bisfuran ring. Then, the activity of the versicolorin B desaturase verB leads to versicolorin A (VERA). DotB, a predicted chloroperoxidase, may perform epoxidation of the A-ring of VERA. Alternatively, a cytochrome P450, such as cypX or avnA could catalyze this step. It is also possible that another, uncharacterized, cytochrome P450 enzyme is responsible for this step. Opening of the epoxide could potentially be achieved by the epoxide hydrolase epoA. However, epoA seems not to be required for DOTH biosynthesis, but other epoxide hydrolases may have the ability to complement this hydrolysis. Alternatively, opening of the epoxide ring could be achieved non-enzymatically. The next step is the deoxygenation of ring A to yield the 5,8-dihydroxyanthraquinone which is most likely catalyzed by the NADPH dehydrogenase encoded by ver1. The last stages of DOTH biosynthesis are proposed to involve hydroxylation of the bisfuran. OrdB and norB might have oxidative roles here. An alternative possibility is that cytochrome P450 monoogenases such as avnA and cypX might perform these steps in addition to previously proposed steps. The chain is Versicolorin B desaturase from Dothistroma septosporum (strain NZE10 / CBS 128990) (Red band needle blight fungus).